Here is a 76-residue protein sequence, read N- to C-terminus: Putative snRNP Sm-like protein (76 aa).

A Sm domain is found at 4 to 76 (RPLDVIHKSL…VLAISPVEIE (73 aa)).

This sequence belongs to the snRNP Sm proteins family.

The polypeptide is Putative snRNP Sm-like protein (Thermococcus sibiricus (strain DSM 12597 / MM 739)).